We begin with the raw amino-acid sequence, 161 residues long: Urease accessory protein UreE (161 aa).

The segment at 133-161 (EPEAGAYQSAPHSHSHAHDHPFVRLPAHS) is disordered.

Belongs to the UreE family.

The protein resides in the cytoplasm. In terms of biological role, involved in urease metallocenter assembly. Binds nickel. Probably functions as a nickel donor during metallocenter assembly. This chain is Urease accessory protein UreE, found in Pseudomonas putida (strain W619).